Reading from the N-terminus, the 3082-residue chain is Autotransporter adhesin BadA (3082 aa).

The signal sequence occupies residues 1–47 (MKKLSVTSKRQYNLYASPISRRLSLLMKLSLETVTVMFLLGASPVLA). The interval 48–376 (SNLALTGAKN…DAVNVAQLKA (329 aa)) is binds to host cells. The surface exposed passenger domain stretch occupies residues 48–2901 (SNLALTGAKN…KVQDIATVAD (2854 aa)). The does not bind host cells, no host proangiogenic cytokine induction, collagen or fibronectin, no autoagglutination stretch occupies residues 53–2850 (TGAKNLSQNS…DARHNGVDSK (2798 aa)). Residues 470–2850 (ITGVAEGTDA…DARHNGVDSK (2381 aa)) are required to bind fibronectin, not required for surface expression on bacteria, bacterial autoagglutination, host cell binding, collagen binding or host proangiogenic cytokine induction. The segment at 2902-3027 (SAVKYEKDST…VSNLRYYDIP (126 aa)) is outer membrane translocation of the passenger domain. Transmembrane regions (beta stranded) follow at residues 3028 to 3039 (GSLSLSFGTGIW), 3044 to 3051 (AFAIGAGY), 3055 to 3065 (DGNIRSNLSIT), and 3070 to 3082 (QWGV…LRLK). The translocator domain stretch occupies residues 3028-3082 (GSLSLSFGTGIWRSQSAFAIGAGYTSEDGNIRSNLSITSSGGQWGVGAGITLRLK).

This sequence belongs to the autotransporter-2 (AT-2) (TC 1.B.40) family. Homotrimer. Crystals of the head region form trimers.

The protein localises to the cell surface. It is found in the cell outer membrane. In terms of biological role, mediates bacterial adherence to host endothelial cells and host extracellular matrix proteins (collagen type I, III, IV, laminin and fibronectin). Static versus dynamic adherence results differ slightly; in dynamic adherence studies bacteria bind to fixed components under a constant defined flow rate to simulate in vivo infection conditions. Induces secretion of host proangiogenic cytokines such as VEGFA, ADM, IGFBP-3 and IL-8. May prevent bacterial phagocytosis by macrophages. Probably mediates bacterial autoagglutination. Negatively impacts type IV secretion system effectors (VirB/D4 T4SS and its substrate Bep proteins), possibly by preventing close association of host and bacterial cells. This implies the 2 factors are expressed at different times during infection. The chain is Autotransporter adhesin BadA from Bartonella henselae (Rochalimaea henselae).